A 264-amino-acid polypeptide reads, in one-letter code: Matrilysin (264 aa).

Residues 1 to 17 (MQLTLFCFVCLLPGHLA) form the signal peptide. A propeptide spans 18–94 (LPLSQEAGDV…PRCGVPDVAE (77 aa)) (activation peptide). The Cysteine switch motif lies at 85–92 (PRCGVPDV). Cys-87 contributes to the Zn(2+) binding site. Residue Asp-153 coordinates Ca(2+). The Zn(2+) site is built by His-163 and Asp-165. Ca(2+) is bound by residues Asp-170, Gly-171, Gly-173, and Thr-175. His-178 lines the Zn(2+) pocket. Positions 185, 187, and 189 each coordinate Ca(2+). Position 191 (His-191) interacts with Zn(2+). Ca(2+)-binding residues include Asp-193 and Glu-196. His-214 contributes to the Zn(2+) binding site. Glu-215 is an active-site residue. The Zn(2+) site is built by His-218 and His-224.

This sequence belongs to the peptidase M10A family. Ca(2+) serves as cofactor. The cofactor is Zn(2+). As to expression, expressed in the intestinal epithelium (at protein level).

Its subcellular location is the secreted. The protein localises to the extracellular space. It is found in the extracellular matrix. It carries out the reaction Cleavage of 14-Ala-|-Leu-15 and 16-Tyr-|-Leu-17 in B chain of insulin. No action on collagen types I, II, IV, V. Cleaves gelatin chain alpha2(I) &gt; alpha1(I).. Functionally, degrades casein, gelatins of types I, III, IV, and V, and fibronectin. Activates procollagenase. Its function is as follows. May play a role in tissue reorganization. This Mus musculus (Mouse) protein is Matrilysin (Mmp7).